We begin with the raw amino-acid sequence, 409 residues long: Na(+)-translocating NADH-quinone reductase subunit F (409 aa).

A helical transmembrane segment spans residues 5–25 (FIFGIIAFTALVLVLAVIILF). Residues 34-128 (GDITISINDD…SMDVELPEEI (95 aa)) enclose the 2Fe-2S ferredoxin-type domain. The [2Fe-2S] cluster site is built by cysteine 71, cysteine 77, cysteine 80, and cysteine 112. The region spanning 131–271 (VKKWECTVIS…SGPFGEFFAK (141 aa)) is the FAD-binding FR-type domain.

The protein belongs to the NqrF family. As to quaternary structure, composed of six subunits; NqrA, NqrB, NqrC, NqrD, NqrE and NqrF. Requires [2Fe-2S] cluster as cofactor. The cofactor is FAD.

It is found in the cell inner membrane. The enzyme catalyses a ubiquinone + n Na(+)(in) + NADH + H(+) = a ubiquinol + n Na(+)(out) + NAD(+). Its function is as follows. NQR complex catalyzes the reduction of ubiquinone-1 to ubiquinol by two successive reactions, coupled with the transport of Na(+) ions from the cytoplasm to the periplasm. The first step is catalyzed by NqrF, which accepts electrons from NADH and reduces ubiquinone-1 to ubisemiquinone by a one-electron transfer pathway. This Haemophilus ducreyi (strain 35000HP / ATCC 700724) protein is Na(+)-translocating NADH-quinone reductase subunit F.